The chain runs to 681 residues: Ribosomal L1 domain-containing protein CG13096 (681 aa).

2 disordered regions span residues 1-248 and 579-681; these read MVKV…AKSK and DAAP…DDEE. A phosphoserine mark is found at Ser-15 and Ser-17. The span at 54-74 shows a compositional bias: basic and acidic residues; sequence VKKDAIKKEPEVSKKGAEKKQ. Ser-89 is subject to Phosphoserine. A compositionally biased stretch (low complexity) spans 103–112; that stretch reads KPAASGAPVG. Ser-128 is modified (phosphoserine). A compositionally biased stretch (low complexity) spans 189–217; the sequence is QAAPAKPAKAQPASQLQKKAKAVQKLSKP. Positions 599-610 are enriched in basic and acidic residues; that stretch reads KESSSEGAKADA. A compositionally biased stretch (acidic residues) spans 611–681; sequence ESDEEEEVEE…EDDDDDDDEE (71 aa).

Belongs to the universal ribosomal protein uL1 family. Highly divergent.

The chain is Ribosomal L1 domain-containing protein CG13096 from Drosophila melanogaster (Fruit fly).